A 375-amino-acid chain; its full sequence is G-protein coupled estrogen receptor 1 (375 aa).

At Met-1 the chain carries N-acetylmethionine. Residues 1–62 (MAATTPAQDV…QQYVIALFLS (62 aa)) lie on the Extracellular side of the membrane. 2 N-linked (GlcNAc...) asparagine glycosylation sites follow: Asn-32 and Asn-44. The chain crosses the membrane as a helical span at residues 63 to 84 (CLYTIFLFPIGFVGNILILVVN). Over 85 to 96 (ISFREKMTIPDL) the chain is Cytoplasmic. The chain crosses the membrane as a helical span at residues 97-120 (YFINLAAADLILVADSLIEVFNLD). Topologically, residues 121–132 (EQYYDIAVLCTF) are extracellular. Cys-130 and Cys-207 form a disulfide bridge. A helical membrane pass occupies residues 133-153 (MSLFLQINMYSSVFFLTWMSF). Topologically, residues 154–175 (DRYLALAKAMRCGLFRTKHHAR) are cytoplasmic. Residues 176–194 (LSCGLIWMASVSATLVPFT) traverse the membrane as a helical segment. Residues 195-220 (AVHLRHTEEACFCFADVREVQWLEVT) are Extracellular-facing. The chain crosses the membrane as a helical span at residues 221–236 (LGFIVPFAIIGLCYSL). Topologically, residues 237-259 (IVRALIRAHRHRGLRPRRQKALR) are cytoplasmic. A helical transmembrane segment spans residues 260-280 (MIFAVVLVFFICWLPENVFIS). Over 281-306 (VHLLQWAQPGDTPCKQSFRHAYPLTG) the chain is Extracellular. Residues 307 to 327 (HIVNLAAFSNSCLSPLIYSFL) traverse the membrane as a helical segment. Topologically, residues 328–375 (GETFRDKLRLYVAQKTSLPALNRFCHATLKAVIPDSTEQSDVKFSSAV) are cytoplasmic.

Belongs to the G-protein coupled receptor 1 family. Homodimer. Heterodimer; heterodimerizes with other G-protein-coupled receptor (GPCRs) like CRHR1, HTR1A and PAQR8. Interacts with RAMP3; the interaction confers proper subcellular localization and function in cardioprotection. Interacts with KRT7 and KRT8. Interacts with EGFR; the interaction increases after agonist-induced stimulation in cancer-associated fibroblasts (CAF). Interacts with EGFR and ESR1. Interacts (via C-terminus tail motif) with DLG4 (via N-terminus tandem pair of PDZ domains); the interaction is direct and induces the increase of GPER1 protein levels residing at the plasma membrane surface in a estradiol-independent manner. In terms of processing, ubiquitinated; ubiquitination occurs at the plasma membrane and leads to proteasome-mediated degradation. Glycosylated. Expressed in the brain. Expressed in neurons of the hippocampus, hypothalamic paraventricular nucleus (PVN), supraoptic nucleus (SON) and the median eminence. Expressed in magnocellular neurosecretory cells (MNCs) which secrete oxytocin but not in MNCs which secrete vasopressin. Expressed in glial cells. Expressed in the nucleus ambiguous. Expressed in epithelial cells, in pachytene spermatocytes (PS) (at protein level). Expressed strongly in vascular endothelial cells and poorly in vascular smooth muscle cells (VSMC). Expressed in the brain, lung, pituitary gland, adrenal medulla, renal pelvis and ovary. Expressed in CA1 hippocampus. Expressed weakly in heart, skeletal muscle and kidney.

It localises to the nucleus. It is found in the cytoplasm. Its subcellular location is the perinuclear region. The protein resides in the cytoskeleton. The protein localises to the cytoplasmic vesicle membrane. It localises to the cell membrane. It is found in the basolateral cell membrane. Its subcellular location is the endoplasmic reticulum membrane. The protein resides in the early endosome. The protein localises to the recycling endosome. It localises to the golgi apparatus. It is found in the trans-Golgi network. Its subcellular location is the golgi apparatus membrane. The protein resides in the cell projection. The protein localises to the dendrite. It localises to the dendritic spine membrane. It is found in the axon. Its subcellular location is the postsynaptic density. The protein resides in the mitochondrion membrane. Functionally, G-protein coupled estrogen receptor that binds to 17-beta-estradiol (E2) with high affinity, leading to rapid and transient activation of numerous intracellular signaling pathways. Stimulates cAMP production, calcium mobilization and tyrosine kinase Src inducing the release of heparin-bound epidermal growth factor (HB-EGF) and subsequent transactivation of the epidermal growth factor receptor (EGFR), activating downstream signaling pathways such as PI3K/Akt and ERK/MAPK. Mediates pleiotropic functions among others in the cardiovascular, endocrine, reproductive, immune and central nervous systems. Has a role in cardioprotection by reducing cardiac hypertrophy and perivascular fibrosis in a RAMP3-dependent manner. Regulates arterial blood pressure by stimulating vasodilation and reducing vascular smooth muscle and microvascular endothelial cell proliferation. Plays a role in blood glucose homeostasis contributing to the insulin secretion response by pancreatic beta cells. Triggers mitochondrial apoptosis during pachytene spermatocyte differentiation. Stimulates uterine epithelial cell proliferation. Enhances uterine contractility in response to oxytocin. Contributes to thymic atrophy by inducing apoptosis. Attenuates TNF-mediated endothelial expression of leukocyte adhesion molecules. Promotes neuritogenesis in developing hippocampal neurons. Plays a role in acute neuroprotection against NMDA-induced excitotoxic neuronal death. Increases firing activity and intracellular calcium oscillations in luteinizing hormone-releasing hormone (LHRH) neurons. Inhibits early osteoblast proliferation at growth plate during skeletal development. Inhibits mature adipocyte differentiation and lipid accumulation. Involved in the recruitment of beta-arrestin 2 ARRB2 at the plasma membrane in epithelial cells. Also functions as a receptor for aldosterone mediating rapid regulation of vascular contractibility through the PI3K/ERK signaling pathway. Involved in cancer progression regulation. Stimulates cancer-associated fibroblast (CAF) proliferation by a rapid genomic response through the EGFR/ERK transduction pathway. Associated with EGFR, may act as a transcription factor activating growth regulatory genes (c-fos, cyclin D1). Promotes integrin alpha-5/beta-1 and fibronectin (FN) matrix assembly in breast cancer cells. The polypeptide is G-protein coupled estrogen receptor 1 (Gper1) (Rattus norvegicus (Rat)).